A 179-amino-acid polypeptide reads, in one-letter code: UPF0303 protein YBR137W (179 aa).

It belongs to the UPF0303 family.

The protein localises to the cytoplasm. The protein is UPF0303 protein YBR137W of Saccharomyces cerevisiae (strain ATCC 204508 / S288c) (Baker's yeast).